The following is a 156-amino-acid chain: Endogenous retrovirus group K member 25 Pro protein (156 aa).

Residues 21-96 (FEGLVDTGAD…IPLNLWGRDL (76 aa)) enclose the Peptidase A2 domain. Asp26 is a catalytic residue. The G-patch domain maps to 111–156 (YSPTSQKIMTKMGYIPGKGLGKNEDGIKIPVEAKINQKREGIGYPF).

The protein belongs to the peptidase A2 family. HERV class-II K(HML-2) subfamily. In terms of assembly, active as a homodimer. Post-translationally, autoproteolytically processed at the N-terminus. Expected C-terminal autoprocessing not detected. The sequence shown is that of the processed Pro protein.

It carries out the reaction Processing at the authentic HIV-1 PR recognition site and release of the mature p17 matrix and the p24 capsid protein, as a result of the cleavage of the -SQNY-|-PIVQ- cleavage site.. Retroviral proteases have roles in processing of the primary translation products and the maturation of the viral particle. Endogenous Pro proteins may have kept, lost or modified their original function during evolution. This endogenous protein has retained most of the characteristics of retroviral proteases. This chain is Endogenous retrovirus group K member 25 Pro protein (ERVK-25), found in Homo sapiens (Human).